The primary structure comprises 670 residues: Transketolase, chromosomal (670 aa).

Histidine 32 serves as a coordination point for substrate. Thiamine diphosphate contacts are provided by residues histidine 72 and 120-122 (GPL). Aspartate 161 provides a ligand contact to Mg(2+). 2 residues coordinate thiamine diphosphate: glycine 162 and asparagine 191. Mg(2+) is bound by residues asparagine 191 and isoleucine 193. Substrate contacts are provided by histidine 267, arginine 364, and serine 391. Histidine 267 lines the thiamine diphosphate pocket. Catalysis depends on glutamate 417, which acts as the Proton donor. Phenylalanine 443 serves as a coordination point for thiamine diphosphate. Substrate contacts are provided by histidine 467, aspartate 475, and arginine 526.

It belongs to the transketolase family. Homodimer. The cofactor is Mg(2+). Ca(2+) serves as cofactor. It depends on Mn(2+) as a cofactor. Requires Co(2+) as cofactor. Thiamine diphosphate is required as a cofactor.

The catalysed reaction is D-sedoheptulose 7-phosphate + D-glyceraldehyde 3-phosphate = aldehydo-D-ribose 5-phosphate + D-xylulose 5-phosphate. It participates in carbohydrate biosynthesis; Calvin cycle. In terms of biological role, catalyzes the transfer of a two-carbon ketol group from a ketose donor to an aldose acceptor, via a covalent intermediate with the cofactor thiamine pyrophosphate. The protein is Transketolase, chromosomal (cbbTC) of Cupriavidus necator (strain ATCC 17699 / DSM 428 / KCTC 22496 / NCIMB 10442 / H16 / Stanier 337) (Ralstonia eutropha).